A 76-amino-acid polypeptide reads, in one-letter code: Transcription modulator YdgT (76 aa).

It belongs to the Hha/YmoA/Cnu family.

Its function is as follows. Binds to H-NS and modifies the range of genes it silences; H-NS alone silences 'core' genes while the H-NS-Hha complex (and presumably also H-NS-YdgT) silences genes acquired by horizontal gene transfer. Plays a role silencing virulence factors in the absence of factors that induce pathogenicity. This chain is Transcription modulator YdgT (ydgT), found in Salmonella typhimurium (strain SL1344).